Reading from the N-terminus, the 379-residue chain is Pectin lyase A (379 aa).

Residues 1-20 (MKTTFLVSLATAALSSTAAA) form the signal peptide. Cystine bridges form between C83–C102 and C92–C226. R256 is a catalytic residue. C323 and C331 form a disulfide bridge.

It belongs to the polysaccharide lyase 1 family.

The protein resides in the secreted. The catalysed reaction is Eliminative cleavage of (1-&gt;4)-alpha-D-galacturonan methyl ester to give oligosaccharides with 4-deoxy-6-O-methyl-alpha-D-galact-4-enuronosyl groups at their non-reducing ends.. Functionally, pectinolytic enzymes consist of four classes of enzymes: pectin lyase, polygalacturonase, pectin methylesterase and rhamnogalacturonase. Among pectinolytic enzymes, pectin lyase is the most important in depolymerization of pectin, since it cleaves internal glycosidic bonds of highly methylated pectins. The polypeptide is Pectin lyase A (pelA) (Emericella nidulans (strain FGSC A4 / ATCC 38163 / CBS 112.46 / NRRL 194 / M139) (Aspergillus nidulans)).